Consider the following 1311-residue polypeptide: Transcriptional regulator ATRX homolog (1311 aa).

A disordered region spans residues 1 to 384 (MGKKNPNARH…KQKNKRKHIR (384 aa)). Residues 28 to 40 (SRRESATESKSAS) are compositionally biased toward basic and acidic residues. Residues 61–83 (KASGKATVSSSSDSDQAVANSSA) are compositionally biased toward low complexity. The span at 114-125 (RGSQQKNVTIND) shows a compositional bias: polar residues. 2 positions are modified to phosphoserine: Ser-126 and Ser-127. Acidic residues predominate over residues 155 to 166 (SDSEEVDEEEES). Over residues 181-202 (KPEKNSSKASKESIEKRQKAQK) the composition is skewed to basic and acidic residues. Residues 219–237 (RRGSLSSERSSRASSSRAE) show a composition bias toward low complexity. A compositionally biased stretch (basic residues) spans 241-265 (RPKRCVVRLKRVSLPKTKPAQKPKK). Phosphoserine is present on residues Ser-267, Ser-268, and Ser-270. The span at 290–306 (EADSDYEAPAAEEEEEE) shows a compositional bias: acidic residues. Phosphoserine occurs at positions 336, 338, 342, and 343. The segment covering 336–351 (SESDKGSSDFEPEEKQ) has biased composition (basic and acidic residues). The segment covering 352-361 (KKKGRKRIKK) has biased composition (basic residues). Residues 476–664 (ESQEKPGSGC…YCMIQFVKPN (189 aa)) enclose the Helicase ATP-binding domain. 489–496 (HCMGLGKT) serves as a coordination point for ATP. The DEGH box signature appears at 615-618 (DEGH). Residues 837–878 (ASSGKVKKRKTRNGNAGGGDSDSDLEMLGGLGGGSSVQKDDP) are disordered. Phosphoserine occurs at positions 857 and 859. Residues 905 to 1085 (RLLQQCEAIG…SRHYNQTDLM (181 aa)) enclose the Helicase C-terminal domain. The interval 1285–1311 (MAGGSVAHGPPAAPAPGFEPDKVYEID) is disordered.

Belongs to the SNF2/RAD54 helicase family.

It localises to the nucleus. The protein resides in the chromosome. The enzyme catalyses ATP + H2O = ADP + phosphate + H(+). Its function is as follows. Global transcriptional regulator. Modifies gene expression by affecting chromatin. The protein is Transcriptional regulator ATRX homolog (XNP) of Drosophila melanogaster (Fruit fly).